The primary structure comprises 370 residues: Uroporphyrinogen decarboxylase (370 aa).

Residues 29-33 (RQAGR), aspartate 79, tyrosine 155, serine 210, and histidine 342 contribute to the substrate site.

Belongs to the uroporphyrinogen decarboxylase family. As to quaternary structure, homodimer.

The protein resides in the cytoplasm. It catalyses the reaction uroporphyrinogen III + 4 H(+) = coproporphyrinogen III + 4 CO2. Its pathway is porphyrin-containing compound metabolism; protoporphyrin-IX biosynthesis; coproporphyrinogen-III from 5-aminolevulinate: step 4/4. Catalyzes the decarboxylation of four acetate groups of uroporphyrinogen-III to yield coproporphyrinogen-III. The chain is Uroporphyrinogen decarboxylase from Acidovorax sp. (strain JS42).